The primary structure comprises 119 residues: Large ribosomal subunit protein bL19 (119 aa).

It belongs to the bacterial ribosomal protein bL19 family.

In terms of biological role, this protein is located at the 30S-50S ribosomal subunit interface and may play a role in the structure and function of the aminoacyl-tRNA binding site. This chain is Large ribosomal subunit protein bL19, found in Petrotoga mobilis (strain DSM 10674 / SJ95).